Here is a 662-residue protein sequence, read N- to C-terminus: Probable quinol oxidase subunit 1 (662 aa).

2 consecutive transmembrane segments (helical) span residues 14–34 (WMIT…IAVI) and 58–78 (VMYL…ALLI). A Fe(II)-heme a-binding site is contributed by histidine 102. Transmembrane regions (helical) follow at residues 103–123 (GVIM…NIVV), 140–160 (VSFW…IIGG), 187–207 (IAIQ…FVTI), 228–248 (FITT…LALM), 273–293 (FFWV…FGIY), 311–331 (MVWA…HHFF), 336–356 (GALI…PTGV), and 376–396 (MLFS…GVML). Residues histidine 279, tyrosine 283, histidine 328, and histidine 329 each contribute to the Cu cation site. The segment at residues 279-283 (HPEVY) is a cross-link (1'-histidyl-3'-tyrosine (His-Tyr)). Residue histidine 414 participates in heme a3 binding. The next 5 helical transmembrane spans lie at 415–435 (FHYT…IFWY), 451–471 (CFWF…ILGL), 493–513 (ISTI…VSIV), 587–604 (PVGF…FFLI), and 608–627 (VIPA…YRSF). Histidine 416 is a Fe(II)-heme a binding site.

Belongs to the heme-copper respiratory oxidase family. The cofactor is Cu cation. It depends on ferriheme a as a cofactor. Requires Heme A3. as cofactor.

The protein resides in the cell membrane. The catalysed reaction is 2 a quinol + O2 = 2 a quinone + 2 H2O. Its pathway is energy metabolism; oxidative phosphorylation. Functionally, catalyzes quinol oxidation with the concomitant reduction of oxygen to water. This is Probable quinol oxidase subunit 1 (qoxB) from Staphylococcus aureus (strain COL).